The following is a 333-amino-acid chain: Uroporphyrinogen decarboxylase (333 aa).

Substrate is bound by residues 21 to 25, D70, Y139, S194, and H309; that span reads RQVGR.

Belongs to the uroporphyrinogen decarboxylase family. In terms of assembly, homodimer.

The protein resides in the cytoplasm. The enzyme catalyses uroporphyrinogen III + 4 H(+) = coproporphyrinogen III + 4 CO2. The protein operates within porphyrin-containing compound metabolism; protoporphyrin-IX biosynthesis; coproporphyrinogen-III from 5-aminolevulinate: step 4/4. In terms of biological role, catalyzes the decarboxylation of four acetate groups of uroporphyrinogen-III to yield coproporphyrinogen-III. This is Uroporphyrinogen decarboxylase from Chlamydia caviae (strain ATCC VR-813 / DSM 19441 / 03DC25 / GPIC) (Chlamydophila caviae).